The sequence spans 443 residues: Chromosome partition protein MukF (443 aa).

Residues 209–237 are leucine-zipper; sequence LDETSGNLRELQDTLNAAGDKLQAQLLRI.

It belongs to the MukF family. Interacts, and probably forms a ternary complex, with MukE and MukB via its C-terminal region. The complex formation is stimulated by calcium or magnesium. It is required for an interaction between MukE and MukB.

It is found in the cytoplasm. Its subcellular location is the nucleoid. In terms of biological role, involved in chromosome condensation, segregation and cell cycle progression. May participate in facilitating chromosome segregation by condensation DNA from both sides of a centrally located replisome during cell division. Not required for mini-F plasmid partitioning. Probably acts via its interaction with MukB and MukE. Overexpression results in anucleate cells. It has a calcium binding activity. The protein is Chromosome partition protein MukF of Actinobacillus pleuropneumoniae serotype 5b (strain L20).